The following is a 210-amino-acid chain: Ion-translocating oxidoreductase complex subunit G (210 aa).

A helical membrane pass occupies residues 9-29 (SLVLALFAIAATALVTITYAL). T176 is subject to FMN phosphoryl threonine.

This sequence belongs to the RnfG family. As to quaternary structure, the complex is composed of six subunits: RnfA, RnfB, RnfC, RnfD, RnfE and RnfG. FMN is required as a cofactor.

Its subcellular location is the cell inner membrane. In terms of biological role, part of a membrane-bound complex that couples electron transfer with translocation of ions across the membrane. In Aliivibrio fischeri (strain ATCC 700601 / ES114) (Vibrio fischeri), this protein is Ion-translocating oxidoreductase complex subunit G.